The primary structure comprises 444 residues: Homocysteine/cysteine synthase (444 aa).

At Lys208 the chain carries N6-(pyridoxal phosphate)lysine.

The protein belongs to the trans-sulfuration enzymes family. In terms of assembly, homotetramer. Requires pyridoxal 5'-phosphate as cofactor.

Its subcellular location is the cytoplasm. The enzyme catalyses O-acetyl-L-homoserine + methanethiol = L-methionine + acetate + H(+). It carries out the reaction O-acetyl-L-homoserine + hydrogen sulfide = L-homocysteine + acetate. It catalyses the reaction O-acetyl-L-serine + hydrogen sulfide = L-cysteine + acetate. It participates in amino-acid biosynthesis; L-methionine biosynthesis via de novo pathway; L-homocysteine from O-acetyl-L-homoserine. The protein operates within amino-acid biosynthesis; L-cysteine biosynthesis; L-cysteine from L-serine: step 2/2. Its function is as follows. Catalyzes the conversion of O-acetyl-L-homoserine (OAH) into homocysteine in the methionine biosynthesis pathway. Also catalyzes the conversion of O-acetylserine (OAS) into cysteine, the last step in the cysteine biosynthesis pathway. This is Homocysteine/cysteine synthase (MET17) from Kluyveromyces lactis (strain ATCC 8585 / CBS 2359 / DSM 70799 / NBRC 1267 / NRRL Y-1140 / WM37) (Yeast).